A 379-amino-acid polypeptide reads, in one-letter code: Homoserine O-succinyltransferase (379 aa).

In terms of domain architecture, AB hydrolase-1 spans 51–360 (NAVLICHALS…DAPQGHDAFL (310 aa)). Catalysis depends on serine 157, which acts as the Nucleophile. Residue arginine 227 participates in substrate binding. Catalysis depends on residues aspartate 323 and histidine 356. Substrate is bound at residue aspartate 357.

It belongs to the AB hydrolase superfamily. MetX family. As to quaternary structure, homodimer.

It localises to the cytoplasm. The catalysed reaction is L-homoserine + succinyl-CoA = O-succinyl-L-homoserine + CoA. Its pathway is amino-acid biosynthesis; L-methionine biosynthesis via de novo pathway; O-succinyl-L-homoserine from L-homoserine: step 1/1. In terms of biological role, transfers a succinyl group from succinyl-CoA to L-homoserine, forming succinyl-L-homoserine. This chain is Homoserine O-succinyltransferase, found in Pseudomonas syringae pv. tomato (strain ATCC BAA-871 / DC3000).